The chain runs to 211 residues: FMN-dependent NADH:quinone oxidoreductase 2 (211 aa).

Met102–Phe105 contacts FMN.

The protein belongs to the azoreductase type 1 family. Homodimer. It depends on FMN as a cofactor.

The catalysed reaction is 2 a quinone + NADH + H(+) = 2 a 1,4-benzosemiquinone + NAD(+). It catalyses the reaction N,N-dimethyl-1,4-phenylenediamine + anthranilate + 2 NAD(+) = 2-(4-dimethylaminophenyl)diazenylbenzoate + 2 NADH + 2 H(+). Quinone reductase that provides resistance to thiol-specific stress caused by electrophilic quinones. Its function is as follows. Also exhibits azoreductase activity. Catalyzes the reductive cleavage of the azo bond in aromatic azo compounds to the corresponding amines. The protein is FMN-dependent NADH:quinone oxidoreductase 2 of Bacillus cereus (strain ATCC 14579 / DSM 31 / CCUG 7414 / JCM 2152 / NBRC 15305 / NCIMB 9373 / NCTC 2599 / NRRL B-3711).